The primary structure comprises 313 residues: Transcription factor MafB (313 aa).

2 disordered regions span residues 51 to 77 and 151 to 197; these read QPTGSVSSTPISTPCSSVPSSPSFSPT and MGLP…VEDR. Residues 55 to 76 show a composition bias toward low complexity; sequence SVSSTPISTPCSSVPSSPSFSP. Over residues 154-166 the composition is skewed to basic residues; sequence PHHHPHHHQHQHH. Low complexity predominate over residues 167 to 192; sequence QTSPSPSGSSSSSQQLHHQQQHSSSS. Residues 225 to 250 are basic motif; it reads RLKQKRRTLKNRGYAQSCRYKRVQQK. In terms of domain architecture, bZIP spans 225–288; it reads RLKQKRRTLK…DAYKIKCEKL (64 aa). The interval 253-274 is leucine-zipper; the sequence is LEGEKTQLVQQVEQLKQEVSRL. Residues 292 to 313 are disordered; the sequence is NSSNFREAGSTSDNPSSPEFFM.

Belongs to the bZIP family. Maf subfamily. As to quaternary structure, homodimer or heterodimer with other bHLH-Zip transcription factors. Binds DNA as a homodimer or a heterodimer.

It localises to the nucleus. Acts as a transcriptional activator or repressor. Implicated in the regulation of cell-type specific gene expression and play a role in inductive events during lens development. The protein is Transcription factor MafB (mafb) of Xenopus laevis (African clawed frog).